The chain runs to 239 residues: Ribosomal RNA small subunit methyltransferase A (239 aa).

S-adenosyl-L-methionine contacts are provided by Asn-23, Ile-25, Gly-50, Glu-72, Asp-97, and Asn-116.

Belongs to the class I-like SAM-binding methyltransferase superfamily. rRNA adenine N(6)-methyltransferase family. RsmA subfamily.

The protein resides in the cytoplasm. The enzyme catalyses adenosine(1518)/adenosine(1519) in 16S rRNA + 4 S-adenosyl-L-methionine = N(6)-dimethyladenosine(1518)/N(6)-dimethyladenosine(1519) in 16S rRNA + 4 S-adenosyl-L-homocysteine + 4 H(+). Specifically dimethylates two adjacent adenosines (A1518 and A1519) in the loop of a conserved hairpin near the 3'-end of 16S rRNA in the 30S particle. May play a critical role in biogenesis of 30S subunits. This chain is Ribosomal RNA small subunit methyltransferase A, found in Rickettsia felis (strain ATCC VR-1525 / URRWXCal2) (Rickettsia azadi).